We begin with the raw amino-acid sequence, 89 residues long: OMEGA-ectatommitoxin(02)-Rm1a (89 aa).

An N-terminal signal peptide occupies residues 1 to 30 (MKDSYISIVIAYLMVTFILVSSMPIEGEKG). 3 disulfides stabilise this stretch: Cys-39/Cys-52, Cys-47/Cys-68, and Cys-70/Cys-79. The EGF-like domain maps to 43-80 (YANYCFNGKCVHVVAQDEPGKPCYSCICDKFYIGKRCG).

Belongs to the EGF domain peptide family. In terms of tissue distribution, expressed by the venom gland.

Its subcellular location is the secreted. Ant peptide with probable defensive activity which acts as a potent agonist of the mammalian epidermal growth factor receptor (EGFR). Mimics, both structurally and functionally, vertebrate epidermal growth factor (EGF) peptide hormones. In vivo, intraplantar injection in mice causes long-lasting (several days) hypersensitivity of the injected paw to both mechanical and thermal stimuli. Its long-lasting effect is unusual for venom toxins whose effects are usually immediate. One possible explanation is that it would reduce the duration of a nest attack, discourage future attacks, or enhance the actions of subsequent exposure to other pain-inducing venom peptides. The polypeptide is OMEGA-ectatommitoxin(02)-Rm1a (Rhytidoponera metallica (Australian green-headed ant)).